The following is a 516-amino-acid chain: Lysophosphatidylcholine acyltransferase 2B (516 aa).

N-linked (GlcNAc...) asparagine glycosylation is present at Asn-28. 3 consecutive transmembrane segments (helical) span residues 44–64 (THLS…LVPV), 68–88 (CIVF…INLP), and 102–122 (LIKS…GFLV). The HXXXXD motif signature appears at 142–147 (HSTFFD). EF-hand domains follow at residues 387-422 (PISE…LCNP) and 424-459 (NTEK…AFGV). Residues Asp-400, Asn-402, Asp-404, Thr-406, Glu-411, Asp-437, Asp-439, Asp-441, Tyr-443, and Glu-448 each coordinate Ca(2+).

This sequence belongs to the 1-acyl-sn-glycerol-3-phosphate acyltransferase family.

Its subcellular location is the membrane. It functions in the pathway lipid metabolism; phospholipid metabolism. Probable acetyltransferase. The sequence is that of Lysophosphatidylcholine acyltransferase 2B (Lpcat2b) from Mus musculus (Mouse).